A 387-amino-acid polypeptide reads, in one-letter code: Phosphoglycerate kinase (387 aa).

Substrate-binding positions include 21–23 (DLN), R36, 59–62 (HLGR), R113, and R146. ATP is bound by residues K197, E314, and 340 to 343 (GGDT).

It belongs to the phosphoglycerate kinase family. In terms of assembly, monomer.

Its subcellular location is the cytoplasm. It carries out the reaction (2R)-3-phosphoglycerate + ATP = (2R)-3-phospho-glyceroyl phosphate + ADP. It participates in carbohydrate degradation; glycolysis; pyruvate from D-glyceraldehyde 3-phosphate: step 2/5. The chain is Phosphoglycerate kinase from Tolumonas auensis (strain DSM 9187 / NBRC 110442 / TA 4).